The following is a 278-amino-acid chain: MTQMNYTGKVKRVAIIANGKYQSKRVASKLFSVFKDDPDFYLSKKNPDIVISIGGDGMLLSAFHMYEKELDKVRFVGIHTGHLGFYTDYRDFEVDKLIDNLRKDKGEQISYPILKVAITLDDGRVVKARALNEATVKRIEKTMVADVIINHVKFESFRGDGISVSTPTGSTAYNKSLGGAVLHPTIEALQLTEISSLNNRVFRTLGSSIIIPKKDKIELVPKRLGIYTISIDNKTYQLKNVTKVEYFIDDEKIHFVSSPSHTSFWERVKDAFIGEIDS.

The Proton acceptor role is filled by D56. NAD(+) contacts are provided by residues 56 to 57 (DG), 132 to 133 (NE), R158, D160, and 171 to 176 (TAYNKS).

Belongs to the NAD kinase family. Requires a divalent metal cation as cofactor.

The protein localises to the cytoplasm. It catalyses the reaction NAD(+) + ATP = ADP + NADP(+) + H(+). Involved in the regulation of the intracellular balance of NAD and NADP, and is a key enzyme in the biosynthesis of NADP. Catalyzes specifically the phosphorylation on 2'-hydroxyl of the adenosine moiety of NAD to yield NADP. The sequence is that of NAD kinase from Streptococcus pyogenes serotype M1.